We begin with the raw amino-acid sequence, 281 residues long: Elongation factor Ts (281 aa).

Residues 80–83 (TDFV) form an involved in Mg(2+) ion dislocation from EF-Tu region.

It belongs to the EF-Ts family.

The protein localises to the cytoplasm. Associates with the EF-Tu.GDP complex and induces the exchange of GDP to GTP. It remains bound to the aminoacyl-tRNA.EF-Tu.GTP complex up to the GTP hydrolysis stage on the ribosome. The polypeptide is Elongation factor Ts (Vibrio campbellii (strain ATCC BAA-1116)).